The following is a 124-amino-acid chain: Small ribosomal subunit protein uS10 (124 aa).

Belongs to the universal ribosomal protein uS10 family.

This chain is Small ribosomal subunit protein uS10 (rps20), found in Dictyostelium discoideum (Social amoeba).